The following is a 518-amino-acid chain: Bifunctional enzyme NanE/NanK (518 aa).

The interval methionine 1–serine 234 is manNAc-6-P epimerase. Residues serine 235–serine 518 are manNAc kinase. ATP is bound by residues alanine 239–lysine 246 and glycine 365–leucine 372.

This sequence in the N-terminal section; belongs to the NanE family. The protein in the C-terminal section; belongs to the ROK (NagC/XylR) family. NanK subfamily.

The enzyme catalyses an N-acyl-D-glucosamine 6-phosphate = an N-acyl-D-mannosamine 6-phosphate. The catalysed reaction is an N-acyl-D-mannosamine + ATP = an N-acyl-D-mannosamine 6-phosphate + ADP + H(+). The protein operates within amino-sugar metabolism; N-acetylneuraminate degradation; D-fructose 6-phosphate from N-acetylneuraminate: step 2/5. Its pathway is amino-sugar metabolism; N-acetylneuraminate degradation; D-fructose 6-phosphate from N-acetylneuraminate: step 3/5. Converts N-acetylmannosamine-6-phosphate (ManNAc-6-P) to N-acetylglucosamine-6-phosphate (GlcNAc-6-P). In terms of biological role, catalyzes the phosphorylation of N-acetylmannosamine (ManNAc) to ManNAc-6-P. The chain is Bifunctional enzyme NanE/NanK (nanEK) from Brucella melitensis biotype 1 (strain ATCC 23456 / CCUG 17765 / NCTC 10094 / 16M).